The following is a 190-amino-acid chain: dCTP deaminase (190 aa).

DCTP is bound by residues 111–116 (KSTYAR), 135–137 (TLE), Gln-156, Tyr-172, and Gln-182. Residue Glu-137 is the Proton donor/acceptor of the active site.

Belongs to the dCTP deaminase family. As to quaternary structure, homotrimer.

It catalyses the reaction dCTP + H2O + H(+) = dUTP + NH4(+). Its pathway is pyrimidine metabolism; dUMP biosynthesis; dUMP from dCTP (dUTP route): step 1/2. Catalyzes the deamination of dCTP to dUTP. This chain is dCTP deaminase, found in Stenotrophomonas maltophilia (strain R551-3).